The sequence spans 690 residues: MTSVSYRPEPGSIPTDPGVYTFRDAHERVIYVGKAKNLRARLSNYFQDLDQLHPRTRAMVQSANHVQWTVVSSELEALNLEYTWIKRFNPRFNVMYRDDKTYPMLAISVKEQIPRAFMYRGPRRKGVRYFGPYPKAWAIRETLESLTRVFPIRTCSAGVYRRHEALGRPCLLGYIDRCSAPCVGKITPEDHRALVDQFSSFLAGNTEPVLRRVRKEMEQASENLDFERAASLRDQLQAMQKSMERQAVVFSDNTDADLIAFVADELEAAVQIFHVRGGRIHGQRGWVVEREDLSEEKLVADFITQFYGETAELAKATETQVGGASGPEVDRDLARAINPAAAQDLGDLVGDVQVTPVPREILVHAMPDDADDLAAWLTSLRGSNMQIRVPQRGDKKALMTTAETNATQALAQHKLKRAGDITARSAALKELQEALWMDESPLRIECTDISHIQGTDVVASLVVFEDGLPKKADYRRYKIRDAAGDGHSDDVASIAEVVRRRFKRYQQDKSAVPAGDDAGDLLEGETELEDNSAEGTDPATEKRKFAYPPQLFIVDGGLPQVNAAQEVLDELGVNDVTLVGIAKRLEEIWVPGEEYPIIVPRNSPALYLVQNLRDEAHRFAITFHRQQRSARMRRSKLDDIPGLGPKRRKQLVKEFGSVARVKEASVEDIAALPGFGPKLAQLIHDALNAE.

Residues 15-94 (TDPGVYTFRD…IKRFNPRFNV (80 aa)) enclose the GIY-YIG domain. The 36-residue stretch at 207-242 (EPVLRRVRKEMEQASENLDFERAASLRDQLQAMQKS) folds into the UVR domain.

The protein belongs to the UvrC family. In terms of assembly, interacts with UvrB in an incision complex.

It localises to the cytoplasm. Its function is as follows. The UvrABC repair system catalyzes the recognition and processing of DNA lesions. UvrC both incises the 5' and 3' sides of the lesion. The N-terminal half is responsible for the 3' incision and the C-terminal half is responsible for the 5' incision. The sequence is that of UvrABC system protein C from Corynebacterium jeikeium (strain K411).